We begin with the raw amino-acid sequence, 144 residues long: Actin-associated protein FAM107A (144 aa).

A coiled-coil region spans residues 67-94 (LQRVLEHRRRNQLIKKKKEELEAKRLQC). Residues 74–84 (RRRNQLIKKKK) carry the Nuclear localization signal motif. The disordered stretch occupies residues 105–124 (QRLNQLEKPPEKEEDHAPEF). Residues 112–124 (KPPEKEEDHAPEF) are compositionally biased toward basic and acidic residues.

Belongs to the FAM107 family. Interacts with ACTB. Interacts with COMMD1; this interaction stabilizes COMMD1 in the nucleus. Interacts with MAP1A. Interacts with PRDX1. Interacts with F-actin.

It localises to the nucleus. It is found in the cytoplasm. The protein localises to the cytoskeleton. The protein resides in the stress fiber. Its subcellular location is the cell junction. It localises to the focal adhesion. It is found in the cell projection. The protein localises to the ruffle membrane. The protein resides in the synapse. Stress-inducible actin-binding protein that plays a role in synaptic and cognitive functions by modulating actin filamentous (F-actin) dynamics. Mediates polymerization of globular actin to F-actin. Also binds to, stabilizes and bundles F-actin. Involved in synaptic function by regulating neurite outgrowth in an actin-dependent manner and for the acquisition of hippocampus-dependent cognitive function, such as learning and long-term memory. Plays a role in the actin and microtubule cytoskeleton organization; negatively regulates focal adhesion (FA) assembly promoting malignant glial cell migration in an actin-, microtubule- and MAP1A-dependent manner. Also involved in neuroblastoma G1/S phase cell cycle progression and cell proliferation inhibition by stimulating ubiquitination of NF-kappa-B subunit RELA and NF-kappa-B degradation in a COMMD1- and actin-dependent manner. May play a role in tumor development. The chain is Actin-associated protein FAM107A (FAM107A) from Pan troglodytes (Chimpanzee).